Here is a 221-residue protein sequence, read N- to C-terminus: Endo-1,4-beta-xylanase 2 (221 aa).

The N-terminal stretch at 1–19 is a signal peptide; the sequence is MVAFTSLLAGFAAIAGVLS. The 190-residue stretch at 32–221 folds into the GH11 domain; that stretch reads QTIGPGTGYS…SSGSASITVS (190 aa). 2 N-linked (GlcNAc...) asparagine glycosylation sites follow: Asn69 and Asn92. Glu117 functions as the Nucleophile in the catalytic mechanism. The active-site Proton donor is the Glu208.

The protein belongs to the glycosyl hydrolase 11 (cellulase G) family.

It localises to the secreted. It carries out the reaction Endohydrolysis of (1-&gt;4)-beta-D-xylosidic linkages in xylans.. Its pathway is glycan degradation; xylan degradation. Its function is as follows. Endo-1,4-beta-xylanase involved in the hydrolysis of xylan, a major structural heterogeneous polysaccharide found in plant biomass representing the second most abundant polysaccharide in the biosphere, after cellulose. This Trichoderma harzianum (Hypocrea lixii) protein is Endo-1,4-beta-xylanase 2 (Xyn2).